A 98-amino-acid polypeptide reads, in one-letter code: HssA/B-like protein 39 (98 aa).

Residues 1 to 21 (MTLFSSISSMSTSMSGSKSSI) form a disordered region.

This sequence belongs to the hssA/B family.

The sequence is that of HssA/B-like protein 39 (hssl39) from Dictyostelium discoideum (Social amoeba).